The sequence spans 316 residues: Mitochondrial GTPase 1 (316 aa).

Residues 28 to 203 enclose the CP-type G domain; the sequence is MKQMQQKLKQ…LLDTPGILKP (176 aa). GTP contacts are provided by residues 73–76, 147–152, and Gly-199; these read NKKD and NVGKSS.

This sequence belongs to the TRAFAC class YlqF/YawG GTPase family. MTG1 subfamily.

It localises to the mitochondrion inner membrane. Functionally, plays a role in the regulation of the mitochondrial ribosome assembly and of translational activity. Displays mitochondrial GTPase activity. In Aedes aegypti (Yellowfever mosquito), this protein is Mitochondrial GTPase 1.